A 551-amino-acid chain; its full sequence is Cytochrome c lysine N-methyltransferase 1 (551 aa).

In terms of domain architecture, SET spans 46–273; it reads DKIELLRVSS…PNTEVLITYK (228 aa). The SET-like stretch occupies residues 184-288; sequence IELLRQIYSA…LAMITKYGFD (105 aa).

This sequence belongs to the class V-like SAM-binding methyltransferase superfamily.

It localises to the cytoplasm. It is found in the cytosol. The enzyme catalyses L-lysyl-[cytochrome c] + S-adenosyl-L-methionine = N(6)-methyl-L-lysyl-[cytochrome c] + S-adenosyl-L-homocysteine + H(+). Its function is as follows. Methyltransferase which mediates trimethylation of cytochrome c (CYC1). The chain is Cytochrome c lysine N-methyltransferase 1 (CTM1) from Candida glabrata (strain ATCC 2001 / BCRC 20586 / JCM 3761 / NBRC 0622 / NRRL Y-65 / CBS 138) (Yeast).